The following is a 468-amino-acid chain: Bone morphogenetic protein 3 (468 aa).

An N-terminal signal peptide occupies residues 1–22 (MAGARGLLCLWLGYFCLNLAQG). Residues 23-358 (QRPNLHLPGL…EQTLKKARRK (336 aa)) constitute a propeptide that is removed on maturation. The segment at 29–53 (LPGLRETEPSDRATGGSPSPDLRPH) is disordered. N-linked (GlcNAc...) asparagine glycosylation is found at Asn115, Asn139, Asn171, and Asn216. The disordered stretch occupies residues 314 to 349 (RKPYKSLQTQPPEKSRNKKKQRKGSHQKGQTLQFDE). Basic residues predominate over residues 329–339 (RNKKKQRKGSH). Positions 340-349 (QKGQTLQFDE) are enriched in polar residues. 3 disulfide bridges follow: Cys366/Cys433, Cys395/Cys465, and Cys399/Cys467. Asn459 is a glycosylation site (N-linked (GlcNAc...) asparagine).

This sequence belongs to the TGF-beta family. Homodimer; disulfide-linked.

It localises to the secreted. Its function is as follows. Negatively regulates bone density. Antagonizes the ability of certain osteogenic BMPs to induce osteoprogenitor differentiation and ossification. This chain is Bone morphogenetic protein 3 (Bmp3), found in Mus musculus (Mouse).